Consider the following 447-residue polypeptide: Probable glycine dehydrogenase (decarboxylating) subunit 1 (447 aa).

The protein belongs to the GcvP family. N-terminal subunit subfamily. As to quaternary structure, the glycine cleavage system is composed of four proteins: P, T, L and H. In this organism, the P 'protein' is a heterodimer of two subunits.

The catalysed reaction is N(6)-[(R)-lipoyl]-L-lysyl-[glycine-cleavage complex H protein] + glycine + H(+) = N(6)-[(R)-S(8)-aminomethyldihydrolipoyl]-L-lysyl-[glycine-cleavage complex H protein] + CO2. In terms of biological role, the glycine cleavage system catalyzes the degradation of glycine. The P protein binds the alpha-amino group of glycine through its pyridoxal phosphate cofactor; CO(2) is released and the remaining methylamine moiety is then transferred to the lipoamide cofactor of the H protein. The sequence is that of Probable glycine dehydrogenase (decarboxylating) subunit 1 from Azorhizobium caulinodans (strain ATCC 43989 / DSM 5975 / JCM 20966 / LMG 6465 / NBRC 14845 / NCIMB 13405 / ORS 571).